Consider the following 529-residue polypeptide: Listeriolysin O (529 aa).

Positions 1-24 (MKKIMLVFITLILVSLPIAQQTEA) are cleaved as a signal peptide. 4 beta stranded membrane-spanning segments follow: residues 214–227 (ESQLIAKFGTAFKA), 234–243 (VNFGAISEGK), 312–321 (STKVKAAFDA), and 329–341 (SGDVELTNIIKNS). A Conserved undecapeptide motif is present at residues 483–493 (ECTGLAWEWWR). A Cholesterol binding motif is present at residues 515–516 (TL).

This sequence belongs to the cholesterol-dependent cytolysin family. As to quaternary structure, homooligomeric pore complex of 35 to 50 subunits; when inserted in the host membrane.

The protein resides in the secreted. The protein localises to the host membrane. It localises to the host cell membrane. With respect to regulation, activity of listeriolysin O is regulated on multiple levels. It should be high in the phagosome, thereby allowing escape of the bacteria from the phagosomal compartment. Then, once inside the host cytosol, the activity must be controlled to prevent lysis of the host plasma membrane and loss of the intracellular environment. A cholesterol-dependent toxin that causes cytolysis by forming pores in cholesterol containing host membranes. After binding to target membranes, the protein undergoes a major conformation change, leading to its insertion in the host membrane and formation of an oligomeric pore complex. Cholesterol is required for binding to host membranes, membrane insertion and pore formation; cholesterol binding is mediated by a Thr-Leu pair in the C-terminus. Acts as a major virulence factor required for the escape of bacteria from phagosomal vacuoles and entry into the host cytosol. Can be reversibly inactivated by oxidation. This is Listeriolysin O (hly) from Listeria monocytogenes serotype 4b (strain F2365).